An 881-amino-acid polypeptide reads, in one-letter code: Rho GTPase-activating protein 17 (881 aa).

One can recognise a BAR domain in the interval 14-246 (QTVGRAEKTE…MRAHQDKWAE (233 aa)). A Rho-GAP domain is found at 252 to 442 (TPLEEHLKRS…PIIQHADWFF (191 aa)). Polar residues predominate over residues 459–475 (TPSSNHSFHTGNDSDSG). Positions 459-482 (TPSSNHSFHTGNDSDSGTLERKRP) are disordered. Phosphoserine occurs at positions 484 and 575. The segment at 511-881 (GGTLNRKHIS…IDNDTESTAL (371 aa)) is disordered. Residues 592-617 (RNNSQIASGQNQPQAAAGSHQLSMGQ) are compositionally biased toward polar residues. Over residues 637 to 650 (APAPPKPGNPPPGH) the composition is skewed to pro residues. Residues 653-664 (GQSSSGTSQHPP) show a composition bias toward low complexity. The span at 665 to 678 (SLSPKPPTRSPSPP) shows a compositional bias: pro residues. A phosphothreonine mark is found at T679 and T682. Over residues 679-698 (TQHTGQPPGQPSAPSQLSAP) the composition is skewed to low complexity. A phosphoserine mark is found at S702 and S704. Composition is skewed to pro residues over residues 712–721 (NHPPPQPPTQ), 752–764 (HTPP…PSTP), and 806–816 (RPSVPPPPQPP). Phosphothreonine occurs at positions 753, 757, and 759. The short motif at 753–766 (TPPQTPTPPSTPPL) is the SH3-binding element. A Phosphoserine modification is found at S762. Position 763 is a phosphothreonine (T763). Residues 822 to 844 (GDSSLTNTAPTASKIVTDSNSRV) show a composition bias toward polar residues. Positions 845–865 (SEPHRSIFPEMHSDSASKDVP) are enriched in basic and acidic residues. Acidic residues predominate over residues 872-881 (IDNDTESTAL).

As to quaternary structure, component of a complex whose core is composed of ARHGAP17, AMOT, PALS1, PATJ and PARD3/PAR3. Interacts with NHERF1, FNBP1, TRIP10, CAPZA (CAPZA1, CAPZA2 or CAPZA3), CAPZB, CD2AP and SH3KBP1/CIN85. In terms of tissue distribution, ubiquitously expressed. Expressed at higher level in heart and placenta.

It is found in the membrane. The protein localises to the cytoplasm. Its subcellular location is the cell junction. The protein resides in the tight junction. In terms of biological role, rho GTPase-activating protein involved in the maintenance of tight junction by regulating the activity of CDC42, thereby playing a central role in apical polarity of epithelial cells. Specifically acts as a GTPase activator for the CDC42 GTPase by converting it to an inactive GDP-bound state. The complex formed with AMOT acts by regulating the uptake of polarity proteins at tight junctions, possibly by deciding whether tight junction transmembrane proteins are recycled back to the plasma membrane or sent elsewhere. Participates in the Ca(2+)-dependent regulation of exocytosis, possibly by catalyzing GTPase activity of Rho family proteins and by inducing the reorganization of the cortical actin filaments. Acts as a GTPase activator in vitro for RAC1. The polypeptide is Rho GTPase-activating protein 17 (ARHGAP17) (Homo sapiens (Human)).